The sequence spans 332 residues: Melanocortin receptor 4 (332 aa).

Residues 1-43 (MNSTHHHGMYTSLHLWNRSSHGLHGNASESLGKGHSDGGCYEQ) are Extracellular-facing. N-linked (GlcNAc...) asparagine glycans are attached at residues Asn2, Asn17, and Asn26. 2 disulfide bridges follow: Cys40–Cys279 and Cys271–Cys277. A helical membrane pass occupies residues 44 to 69 (LFVSPEVFVTLGVISLLENILVIVAI). The Cytoplasmic segment spans residues 70–81 (AKNKNLHSPMYF). The chain crosses the membrane as a helical span at residues 82 to 106 (FICSLAVADMLVSVSNGSETIVITL). Glu100, Asp122, and Asp126 together coordinate Ca(2+). Topologically, residues 107 to 123 (LNSTDTDAQSFTVNIDN) are extracellular. Residues 124 to 145 (VIDSVICSSLLASICSLLSIAV) form a helical membrane-spanning segment. Topologically, residues 146–165 (DRYFTIFYALQYHNIMTVRR) are cytoplasmic. A helical membrane pass occupies residues 166–186 (VGIIISCIWAACTVSGVLFII). Over 187–191 (YSDSS) the chain is Extracellular. The chain crosses the membrane as a helical span at residues 192 to 215 (AVIICLITMFFTMLVLMASLYVHM). The Cytoplasmic segment spans residues 216 to 248 (FLMARLHIKRIAVLPGTGTIRQGANMKGAITLT). Residues 249–271 (ILIGVFVVCWAPFFLHLLFYISC) traverse the membrane as a helical segment. Residues 272 to 280 (PQNPYCVCF) are Extracellular-facing. The chain crosses the membrane as a helical span at residues 281-304 (MSHFNLYLILIMCNAVIDPLIYAL). Over 305 to 332 (RSQELRKTFKEIICFYPLGGICELPGRY) the chain is Cytoplasmic. A lipid anchor (S-palmitoyl cysteine) is attached at Cys318.

The protein belongs to the G-protein coupled receptor 1 family. As to quaternary structure, homodimer; disulfide-linked, also forms higher order oligomers. Interacts with GNAS. Interacts with ATRNL1. Interacts with MGRN1; this interaction competes with GNAS-binding and thus inhibits agonist-induced cAMP production. Interacts with MRAP and MRAP2; these associated factors increase ligand-sensitivity and generation of cAMP. As to expression, brain, enriched in the striatum, nucleus accumbens, and periaqueductal gray.

It is found in the cell membrane. Its function is as follows. Hormone receptor that acts as a key component of the leptin-melanocortin pathway at the intersection of homeostatic maintenance of energetic state. Plays a role in regulating food intake: activation by a stimulating hormone such as anorexigenic alpha-melanocyte stimulating hormone (alpha-MSH) inhibits appetite, whereas binding to a natural antagonist like Agouti-related protein/AGRP promotes appetite. G-protein-coupled receptor that activates conventional Galphas signaling leading to induction of anorexogenic signaling in the hypothalamus to result in negative energy balance. Regulates the firing activity of neurons from the hypothalamus by alpha-MSH and AGRP independently of Galphas signaling by ligand-induced coupling of closure of inwardly rectifying potassium channel KCNJ13. In intestinal epithelial cells, plays a role in the inhibition of hepatic glucose production via nesfatin-1/NUCB2 leading to increased cyclic adenosine monophosphate (cAMP) levels and glucagon-like peptide 1 (GLP-1) secretion in the intestinal epithelium. The sequence is that of Melanocortin receptor 4 (Mc4r) from Rattus norvegicus (Rat).